Here is a 71-residue protein sequence, read N- to C-terminus: Large ribosomal subunit protein bL31 (71 aa).

Positions 16, 18, 37, and 40 each coordinate Zn(2+).

It belongs to the bacterial ribosomal protein bL31 family. Type A subfamily. As to quaternary structure, part of the 50S ribosomal subunit. The cofactor is Zn(2+).

In terms of biological role, binds the 23S rRNA. The chain is Large ribosomal subunit protein bL31 from Wigglesworthia glossinidia brevipalpis.